A 442-amino-acid polypeptide reads, in one-letter code: ATP-dependent protease ATPase subunit HslU (442 aa).

Residues Ile18, 60-65 (GVGKTE), Asp255, Glu320, and Arg392 each bind ATP.

It belongs to the ClpX chaperone family. HslU subfamily. As to quaternary structure, a double ring-shaped homohexamer of HslV is capped on each side by a ring-shaped HslU homohexamer. The assembly of the HslU/HslV complex is dependent on binding of ATP.

The protein resides in the cytoplasm. ATPase subunit of a proteasome-like degradation complex; this subunit has chaperone activity. The binding of ATP and its subsequent hydrolysis by HslU are essential for unfolding of protein substrates subsequently hydrolyzed by HslV. HslU recognizes the N-terminal part of its protein substrates and unfolds these before they are guided to HslV for hydrolysis. In Hahella chejuensis (strain KCTC 2396), this protein is ATP-dependent protease ATPase subunit HslU.